Reading from the N-terminus, the 52-residue chain is Large ribosomal subunit protein bL33 (52 aa).

Belongs to the bacterial ribosomal protein bL33 family.

The sequence is that of Large ribosomal subunit protein bL33 from Helicobacter acinonychis (strain Sheeba).